The chain runs to 341 residues: Ferrochelatase (341 aa).

His-210 and Glu-291 together coordinate Fe cation.

This sequence belongs to the ferrochelatase family.

It is found in the cytoplasm. It carries out the reaction heme b + 2 H(+) = protoporphyrin IX + Fe(2+). It participates in porphyrin-containing compound metabolism; protoheme biosynthesis; protoheme from protoporphyrin-IX: step 1/1. Catalyzes the ferrous insertion into protoporphyrin IX. The sequence is that of Ferrochelatase from Alcanivorax borkumensis (strain ATCC 700651 / DSM 11573 / NCIMB 13689 / SK2).